A 235-amino-acid chain; its full sequence is uncharacterized protein (235 aa).

This is an uncharacterized protein from Shigella flexneri.